Here is a 457-residue protein sequence, read N- to C-terminus: GTPase Der (457 aa).

EngA-type G domains follow at residues 4–169 (PTIA…PENN) and 177–352 (IMMS…NQHR). Residues 10 to 17 (GRPNVGKS), 57 to 61 (DTGGL), 120 to 123 (NKCE), 183 to 190 (GRPNVGKS), 230 to 234 (DTAGI), and 295 to 298 (NKWD) contribute to the GTP site. A KH-like domain is found at 353 to 438 (RRVTTSVVNE…PLILLWRGKQ (86 aa)).

It belongs to the TRAFAC class TrmE-Era-EngA-EngB-Septin-like GTPase superfamily. EngA (Der) GTPase family. Associates with the 50S ribosomal subunit.

In terms of biological role, GTPase that plays an essential role in the late steps of ribosome biogenesis. This chain is GTPase Der, found in Prochlorococcus marinus (strain AS9601).